The primary structure comprises 168 residues: GPI-anchored protein LLG1 (168 aa).

The signal sequence occupies residues 1–23; sequence MELLSRALFFFLLLSVLSSFSSS. A glycan (N-linked (GlcNAc...) asparagine) is linked at asparagine 57. A lipid anchor (GPI-anchor amidated asparagine) is attached at asparagine 144. Residues 145–168 constitute a propeptide, removed in mature form; that stretch reads AATTSSSRLWLTVSAALLVFVKLF.

In terms of assembly, interacts with FER. As to expression, expressed in pollen, pollen tubes, sporophytic pistil tissues, in the early stages of female gametophyte development, and in unfertilized, mature ovules. Expressed in roots, lateral roots, shoots, cotyledons, petioles, developing leaves and anther filaments.

The protein localises to the cell membrane. In terms of biological role, component of the FER-regulated Rho GTPase signaling complex. Acts as a chaperone and coreceptor for FER. Required for localization of FER to the plasma membrane. In Arabidopsis thaliana (Mouse-ear cress), this protein is GPI-anchored protein LLG1.